A 244-amino-acid chain; its full sequence is Uridylate kinase (244 aa).

16–19 is an ATP binding site; the sequence is KLSG. A UMP-binding site is contributed by Gly-58. ATP is bound by residues Gly-59 and Arg-63. UMP-binding positions include Asp-78 and 139 to 146; that span reads VGAPYFTT. ATP contacts are provided by Thr-166, Tyr-172, and Asp-175.

This sequence belongs to the UMP kinase family. Homohexamer.

The protein localises to the cytoplasm. It carries out the reaction UMP + ATP = UDP + ADP. Its pathway is pyrimidine metabolism; CTP biosynthesis via de novo pathway; UDP from UMP (UMPK route): step 1/1. Inhibited by UTP. Catalyzes the reversible phosphorylation of UMP to UDP. The protein is Uridylate kinase of Novosphingobium aromaticivorans (strain ATCC 700278 / DSM 12444 / CCUG 56034 / CIP 105152 / NBRC 16084 / F199).